The following is a 267-amino-acid chain: Putative transcription factor Ovo-like 1 (267 aa).

4 consecutive C2H2-type zinc fingers follow at residues 118-140 (FTCHICQKSFTHQRMLNRHMKCH), 146-168 (HLCTYCGKGFNDTFDLKRHVRTH), 174-197 (YKCSLCDKAFTQRCSLESHLKKIH), and 213-236 (YVCEECGCTSESQEGHVLHLKERH).

As to expression, expressed in skin, testis, kidney and weakly in lung. Not detected in heart, brain, spleen, liver and skeletal muscle.

The protein localises to the nucleus. Its function is as follows. Putative transcription factor. Involved in hair formation and spermatogenesis. May function in the differentiation and/or maintenance of the urogenital system. The sequence is that of Putative transcription factor Ovo-like 1 (Ovol1) from Mus musculus (Mouse).